The sequence spans 292 residues: uncharacterized protein (292 aa).

This is an uncharacterized protein from Escherichia coli (strain K12).